The following is a 431-amino-acid chain: Glutamyl-tRNA(Gln) amidotransferase subunit A (431 aa).

Active-site charge relay system residues include Lys-55 and Ser-130. Ser-154 serves as the catalytic Acyl-ester intermediate.

It belongs to the amidase family. GatA subfamily. In terms of assembly, heterotrimer of A, B and C subunits.

The enzyme catalyses L-glutamyl-tRNA(Gln) + L-glutamine + ATP + H2O = L-glutaminyl-tRNA(Gln) + L-glutamate + ADP + phosphate + H(+). Functionally, allows the formation of correctly charged Gln-tRNA(Gln) through the transamidation of misacylated Glu-tRNA(Gln) in organisms which lack glutaminyl-tRNA synthetase. The reaction takes place in the presence of glutamine and ATP through an activated gamma-phospho-Glu-tRNA(Gln). The protein is Glutamyl-tRNA(Gln) amidotransferase subunit A of Methanococcus maripaludis (strain C6 / ATCC BAA-1332).